The following is a 379-amino-acid chain: Tryptophan 2,3-dioxygenase (379 aa).

Substrate is bound by residues 57 to 61 (FIITH) and Arg128. Position 312 (His312) interacts with heme. Thr327 contacts substrate.

Belongs to the tryptophan 2,3-dioxygenase family. Homotetramer. Dimer of dimers. Requires heme as cofactor.

The catalysed reaction is L-tryptophan + O2 = N-formyl-L-kynurenine. The protein operates within amino-acid degradation; L-tryptophan degradation via kynurenine pathway; L-kynurenine from L-tryptophan: step 1/2. It participates in pigment biosynthesis; ommochrome biosynthesis. Functionally, heme-dependent dioxygenase that catalyzes the oxidative cleavage of the L-tryptophan (L-Trp) pyrrole ring and converts L-tryptophan to N-formyl-L-kynurenine. Catalyzes the oxidative cleavage of the indole moiety. This chain is Tryptophan 2,3-dioxygenase, found in Drosophila erecta (Fruit fly).